A 36-amino-acid polypeptide reads, in one-letter code: Cytochrome b6-f complex subunit 5 (36 aa).

Residues 5–25 form a helical membrane-spanning segment; it reads LLSGIVLGLIPITILGLLMAA.

Belongs to the PetG family. In terms of assembly, the 4 large subunits of the cytochrome b6-f complex are cytochrome b6, subunit IV (17 kDa polypeptide, PetD), cytochrome f and the Rieske protein, while the 4 small subunits are PetG, PetL, PetM and PetN. The complex functions as a dimer.

It localises to the plastid. Its subcellular location is the chloroplast thylakoid membrane. Functionally, component of the cytochrome b6-f complex, which mediates electron transfer between photosystem II (PSII) and photosystem I (PSI), cyclic electron flow around PSI, and state transitions. PetG is required for either the stability or assembly of the cytochrome b6-f complex. This is Cytochrome b6-f complex subunit 5 from Cyanidioschyzon merolae (strain NIES-3377 / 10D) (Unicellular red alga).